A 181-amino-acid polypeptide reads, in one-letter code: Large ribosomal subunit protein uL5 (181 aa).

The protein belongs to the universal ribosomal protein uL5 family. As to quaternary structure, part of the 50S ribosomal subunit; part of the 5S rRNA/L5/L18/L25 subcomplex. Contacts the 5S rRNA and the P site tRNA. Forms a bridge to the 30S subunit in the 70S ribosome.

Its function is as follows. This is one of the proteins that bind and probably mediate the attachment of the 5S RNA into the large ribosomal subunit, where it forms part of the central protuberance. In the 70S ribosome it contacts protein S13 of the 30S subunit (bridge B1b), connecting the 2 subunits; this bridge is implicated in subunit movement. Contacts the P site tRNA; the 5S rRNA and some of its associated proteins might help stabilize positioning of ribosome-bound tRNAs. In Desulforamulus reducens (strain ATCC BAA-1160 / DSM 100696 / MI-1) (Desulfotomaculum reducens), this protein is Large ribosomal subunit protein uL5.